The primary structure comprises 547 residues: MNKLIRRAVTIFAVTSVASLFASGVLETSMAESLSTNVISLADTKAKDNTSHKSKKARKNHSKETPVDRKEVAPVHESKATGPKQDSCFGRMYTVKVNDDRNVEITQAVPEYATVGSPYPIEITATGKRDCVDVIITQQLPCEAEFVRSDPATTPTADGKLVWKIDRLGQGEKSKITVWVKPLKEGCCFTAATVCACPEIRSVTKCGQPAICVKQEGPENACLRCPVVYKINIVNQGTATARNVVVENPVPDGYAHSSGQRVLTFTLGDMQPGEHRTITVEFCPLKRGRATNIATVSYCGGHKNTASVTTVINEPCVQVSIAGADWSYVCKPVEYVISVSNPGDLVLRDVVVEDTLSPGVTVLEAAGAQISCNKVVWTVKELNPGESLQYKVLVRAQTPGQFTNNVVVKSCSDCGTCTSCAEATTYWKGVAATHMCVVDTCDPVCVGENTVYRICVTNRGSAEDTNVSLMLKFSKELQPVSFSGPTKGTITGNTVVFDSLPRLGSKETVEFSVTLKAVSAGDARGEAILSSDTLTVPVSDTENTHIY.

The N-terminal stretch at 1 to 22 (MNKLIRRAVTIFAVTSVASLFA) is a signal peptide. A propeptide spanning residues 23-40 (SGVLETSMAESLSTNVIS) is cleaved from the precursor. The interval 45 to 84 (KAKDNTSHKSKKARKNHSKETPVDRKEVAPVHESKATGPK) is disordered. Residues 52–61 (HKSKKARKNH) show a composition bias toward basic residues. The span at 62–79 (SKETPVDRKEVAPVHESK) shows a compositional bias: basic and acidic residues.

As to quaternary structure, part of a disulfide cross-linked outer membrane complex (COMC) composed of the major outer membrane porin (MOMP), the small cysteine-rich protein (OmcA) and the large cysteine-rich periplasmic protein (OmcB).

The protein localises to the periplasm. In elementary bodies (EBs, the infectious stage, which is able to survive outside the host cell) provides the structural integrity of the outer envelope through disulfide cross-links with the small cysteine-rich protein and the major outer membrane protein. It has been described in publications as the Sarkosyl-insoluble COMC (Chlamydia outer membrane complex), and serves as the functional equivalent of peptidoglycan. The chain is Large cysteine-rich periplasmic protein OmcB (omcB) from Chlamydia trachomatis serovar D (strain ATCC VR-885 / DSM 19411 / UW-3/Cx).